The sequence spans 360 residues: Membrane-bound lytic murein transglycosylase C (360 aa).

An N-terminal signal peptide occupies residues 1-16 (MKKYLALALIAPLLVS). A lipid anchor (N-palmitoyl cysteine) is attached at Cys17. Cys17 carries the S-diacylglycerol cysteine lipid modification.

This sequence belongs to the transglycosylase Slt family.

It is found in the cell outer membrane. It catalyses the reaction Exolytic cleavage of the (1-&gt;4)-beta-glycosidic linkage between N-acetylmuramic acid (MurNAc) and N-acetylglucosamine (GlcNAc) residues in peptidoglycan, from either the reducing or the non-reducing ends of the peptidoglycan chains, with concomitant formation of a 1,6-anhydrobond in the MurNAc residue.. Its function is as follows. Murein-degrading enzyme. May play a role in recycling of muropeptides during cell elongation and/or cell division. The protein is Membrane-bound lytic murein transglycosylase C of Klebsiella pneumoniae subsp. pneumoniae (strain ATCC 700721 / MGH 78578).